The primary structure comprises 478 residues: Lipoprotein lipase (478 aa).

Positions 1–27 (MESKALLLVALSVWLQSLIVSREGLAT) are cleaved as a signal peptide. An interaction with GPIHBP1 region spans residues 35–56 (RDFTDIESKFALRTPEDTVEDT). Residues C57 and C70 are joined by a disulfide bond. N-linked (GlcNAc...) asparagine glycosylation occurs at N73. Residue Y124 is modified to 3'-nitrotyrosine. The active-site Nucleophile is S162. The active-site Charge relay system is D186. Y194 bears the 3'-nitrotyrosine mark. Ca(2+) is bound by residues A197, R200, S202, and D205. C246 and C269 are joined by a disulfide. Residues 246 to 269 (CNIGEAIRVIAERGLGDVDQLVKC) are essential for determining substrate specificity. Residue H271 is the Charge relay system of the active site. Disulfide bonds link C294/C313 and C305/C308. The PLAT domain occupies 344 to 467 (FHYQVKMRFS…KGKSSVVFVK (124 aa)). Y346 is subject to 3'-nitrotyrosine. The N-linked (GlcNAc...) asparagine glycan is linked to N389. The tract at residues 420–424 (WSNWW) is important for interaction with lipoprotein particles. The interval 433-437 (KIRVK) is important for heparin binding. The interval 446-470 (IFCSREKKSHLQKGKSSVVFVKCHD) is interaction with GPIHBP1. A disulfide bridge connects residues C448 and C468.

Belongs to the AB hydrolase superfamily. Lipase family. In terms of assembly, homodimer. Interacts with GPIHBP1 with 1:1 stoichiometry. Interacts with APOC2; the interaction activates LPL activity in the presence of lipids. Interaction with heparan sulfate proteoglycans is required to protect LPL against loss of activity. Associates with lipoprotein particles in blood plasma. Interacts with LMF1 and SEL1L; interaction with SEL1L is required to prevent aggregation of newly synthesized LPL in the endoplasmic reticulum (ER), and for normal export of LPL from the ER to the extracellular space. Interacts with SORL1; SORL1 acts as a sorting receptor, promoting LPL localization to endosomes and later to lysosomes, leading to degradation of newly synthesized LPL. In terms of processing, tyrosine nitration after lipopolysaccharide (LPS) challenge down-regulates the lipase activity.

It localises to the cell membrane. The protein localises to the secreted. The protein resides in the extracellular space. Its subcellular location is the extracellular matrix. The enzyme catalyses a triacylglycerol + H2O = a diacylglycerol + a fatty acid + H(+). The catalysed reaction is a 1,2-diacyl-sn-glycero-3-phosphocholine + H2O = a 2-acyl-sn-glycero-3-phosphocholine + a fatty acid + H(+). It carries out the reaction 1,2,3-tri-(9Z-octadecenoyl)-glycerol + H2O = di-(9Z)-octadecenoylglycerol + (9Z)-octadecenoate + H(+). It catalyses the reaction 1,2-di-(9Z-octadecenoyl)-sn-glycero-3-phosphocholine + H2O = (9Z-octadecenoyl)-sn-glycero-3-phosphocholine + (9Z)-octadecenoate + H(+). The enzyme catalyses 1,2,3-tributanoylglycerol + H2O = dibutanoylglycerol + butanoate + H(+). The catalysed reaction is 1,2-dihexadecanoyl-sn-glycero-3-phosphocholine + H2O = hexadecanoyl-sn-glycero-3-phosphocholine + hexadecanoate + H(+). The apolipoprotein APOC2 acts as a coactivator of LPL activity. Ca(2+) binding promotes protein stability and formation of the active homodimer. Interaction with GPIHBP1 protects LPL against inactivation by ANGPTL4. Functionally, key enzyme in triglyceride metabolism. Catalyzes the hydrolysis of triglycerides from circulating chylomicrons and very low density lipoproteins (VLDL), and thereby plays an important role in lipid clearance from the blood stream, lipid utilization and storage. Although it has both phospholipase and triglyceride lipase activities it is primarily a triglyceride lipase with low but detectable phospholipase activity. Mediates margination of triglyceride-rich lipoprotein particles in capillaries. Recruited to its site of action on the luminal surface of vascular endothelium by binding to GPIHBP1 and cell surface heparan sulfate proteoglycans. The chain is Lipoprotein lipase (LPL) from Sus scrofa (Pig).